Consider the following 450-residue polypeptide: Regulator of sigma-E protease RseP (450 aa).

A helical transmembrane segment spans residues 1-21 (MLSFLWDLASFIVALGVLITV). His22 contributes to the Zn(2+) binding site. At 22 to 103 (HEFGHFWVAR…VGQRAAIIAA (82 aa)) the chain is on the periplasmic side. Residue Glu23 is part of the active site. His26 serves as a coordination point for Zn(2+). The chain crosses the membrane as a helical span at residues 104–124 (GPVANFIFAIFAYWLVFIIGV). At 125-375 (PGVRPVVGEI…KGAGMTAELG (251 aa)) the chain is on the cytoplasmic side. PDZ domains are found at residues 127-220 (VRPV…PRGP) and 222-309 (IEPV…PKVI). A helical transmembrane segment spans residues 376–396 (VVYYLPFLALISVNLGIINLF). At 397–429 (PLPVLDGGHLLFLAIEKIKGGPVSERVQDFCYR) the chain is on the periplasmic side. The chain crosses the membrane as a helical span at residues 430–450 (IGSILLVLLMGLALFNDFSRL).

This sequence belongs to the peptidase M50B family. In terms of assembly, interacts with RseA; the third transmembrane domain can be cross-linked to the transmembrane domain of RseA. The cofactor is Zn(2+).

The protein localises to the cell inner membrane. Inhibited by Zn(2+) chelator 1,10-phenanthroline. A site-2 regulated intramembrane protease (S2P) that cleaves the peptide bond between 'Ala-108' and 'Cys-109' in the transmembrane region of RseA. Part of a regulated intramembrane proteolysis (RIP) cascade. Acts on DegS-cleaved RseA to release the cytoplasmic domain of RseA, residue 'Val-148' of RseA may be required for this. This provides the cell with sigma-E (RpoE) activity through the proteolysis of RseA. Can also cleave sequences in transmembrane regions of other proteins (such as LacY) as well as liberated signal peptides of beta-lactamase, OmpF, LivK, SecM, PhoA, LivJ, OmpC, Lpp and TorA, probably within the membrane. Cleaves FecR within its transmembrane region to release an N-terminal cytoplasmic fragment which binds to sigma factor FecI, allowing it to activate transcription of the fecABCDE operon which mediates ferric citrate transport. This Escherichia coli (strain K12) protein is Regulator of sigma-E protease RseP (rseP).